We begin with the raw amino-acid sequence, 97 residues long: Large ribosomal subunit protein bL27 (97 aa).

The disordered stretch occupies residues 1-23; it reads MAHKKGASSSRNGRDSTSKRLGV.

It belongs to the bacterial ribosomal protein bL27 family.

This chain is Large ribosomal subunit protein bL27, found in Acidothermus cellulolyticus (strain ATCC 43068 / DSM 8971 / 11B).